The chain runs to 258 residues: Cobalt-precorrin-4 C(11)-methyltransferase (258 aa).

It belongs to the precorrin methyltransferase family. Homodimer.

It catalyses the reaction Co-precorrin-4 + S-adenosyl-L-methionine = Co-precorrin-5A + S-adenosyl-L-homocysteine + H(+). It participates in cofactor biosynthesis; adenosylcobalamin biosynthesis; cob(II)yrinate a,c-diamide from sirohydrochlorin (anaerobic route): step 4/10. Catalyzes the methylation of C-11 in cobalt-precorrin-4 to form cobalt-precorrin-5A. In Priestia megaterium (Bacillus megaterium), this protein is Cobalt-precorrin-4 C(11)-methyltransferase (cbiF).